The sequence spans 495 residues: Glycerol kinase (495 aa).

An ADP-binding site is contributed by Thr-16. 2 residues coordinate ATP: Thr-16 and Thr-17. Thr-16 is a binding site for sn-glycerol 3-phosphate. Arg-20 contacts ADP. Sn-glycerol 3-phosphate contacts are provided by Arg-86, Glu-87, Tyr-138, and Asp-246. Glycerol is bound by residues Arg-86, Glu-87, Tyr-138, Asp-246, and Gln-247. ADP is bound by residues Thr-268 and Gly-316. Residues Thr-268, Gly-316, Gln-320, and Gly-417 each coordinate ATP. Residues Gly-417 and Asn-421 each coordinate ADP.

It belongs to the FGGY kinase family.

The enzyme catalyses glycerol + ATP = sn-glycerol 3-phosphate + ADP + H(+). The protein operates within polyol metabolism; glycerol degradation via glycerol kinase pathway; sn-glycerol 3-phosphate from glycerol: step 1/1. Inhibited by fructose 1,6-bisphosphate (FBP). Its function is as follows. Key enzyme in the regulation of glycerol uptake and metabolism. Catalyzes the phosphorylation of glycerol to yield sn-glycerol 3-phosphate. This is Glycerol kinase from Synechocystis sp. (strain ATCC 27184 / PCC 6803 / Kazusa).